Here is a 688-residue protein sequence, read N- to C-terminus: Transcription factor GTE9 (688 aa).

The segment at 1-36 (MTERNGGFPGDYCFEAPGGDYDEGSDSPRVSEGSNC) is disordered. In terms of domain architecture, Bromo spans 132–238 (TAVMLLMKQC…KFFEVRWKTL (107 aa)). The NET domain occupies 280-361 (ENVVDPAKRV…EHLREIQNKK (82 aa)). Residues 423–505 (GNSLGSVSGD…AQNEKQLPPE (83 aa)) are disordered. At S478 the chain carries Phosphoserine. The span at 491–500 (QDGNSAQNEK) shows a compositional bias: polar residues. The tract at residues 505-688 (EKSYRAAILK…EIDIEEGEID (184 aa)) is transcription activation domain. Residues 534-613 (TRDPEKLQRE…QSVELNENAK (80 aa)) adopt a coiled-coil conformation. The interval 660–688 (FMKQDEDEEEADPLTSPAPEIDIEEGEID) is disordered.

As to quaternary structure, interacts with BT1.

It is found in the nucleus. The chain is Transcription factor GTE9 (GTE9) from Arabidopsis thaliana (Mouse-ear cress).